Reading from the N-terminus, the 128-residue chain is MLVFSFLFVVVSINLNALIFLCKKSWASYLFLYLYNFFFCEDEYKLTKNCVRVEAIAPFMMCLGSLGAILGKQRTANFLLLSYNVINNPVVLVYYVENFSRINFIKHTTKEKSVIWTNERQLNPWICN.

3 helical membrane passes run 1 to 21, 51 to 71, and 76 to 96; these read MLVF…LIFL, VRVE…AILG, and ANFL…VYYV.

It is found in the membrane. This is an uncharacterized protein from Saccharomyces cerevisiae (strain ATCC 204508 / S288c) (Baker's yeast).